Reading from the N-terminus, the 131-residue chain is Glycine cleavage system H protein (131 aa).

A Lipoyl-binding domain is found at 24-106; sequence RAIVGVSDHA…YGEGWIMVIE (83 aa). N6-lipoyllysine is present on K65.

The protein belongs to the GcvH family. As to quaternary structure, the glycine cleavage system is composed of four proteins: P, T, L and H. Requires (R)-lipoate as cofactor.

Functionally, the glycine cleavage system catalyzes the degradation of glycine. The H protein shuttles the methylamine group of glycine from the P protein to the T protein. This Xylella fastidiosa (strain Temecula1 / ATCC 700964) protein is Glycine cleavage system H protein.